Reading from the N-terminus, the 77-residue chain is Acyl carrier protein (77 aa).

In terms of domain architecture, Carrier spans 1–76 (MADFEKVKSI…DVTKFIDNLK (76 aa)). Residue S36 is modified to O-(pantetheine 4'-phosphoryl)serine.

The protein belongs to the acyl carrier protein (ACP) family. 4'-phosphopantetheine is transferred from CoA to a specific serine of apo-ACP by AcpS. This modification is essential for activity because fatty acids are bound in thioester linkage to the sulfhydryl of the prosthetic group.

The protein localises to the cytoplasm. It participates in lipid metabolism; fatty acid biosynthesis. Functionally, carrier of the growing fatty acid chain in fatty acid biosynthesis. In Leptospira borgpetersenii serovar Hardjo-bovis (strain JB197), this protein is Acyl carrier protein.